We begin with the raw amino-acid sequence, 142 residues long: Large ribosomal subunit protein uL11 (142 aa).

It belongs to the universal ribosomal protein uL11 family. Part of the ribosomal stalk of the 50S ribosomal subunit. Interacts with L10 and the large rRNA to form the base of the stalk. L10 forms an elongated spine to which L12 dimers bind in a sequential fashion forming a multimeric L10(L12)X complex. One or more lysine residues are methylated.

Forms part of the ribosomal stalk which helps the ribosome interact with GTP-bound translation factors. This Mycolicibacterium vanbaalenii (strain DSM 7251 / JCM 13017 / BCRC 16820 / KCTC 9966 / NRRL B-24157 / PYR-1) (Mycobacterium vanbaalenii) protein is Large ribosomal subunit protein uL11.